The primary structure comprises 477 residues: Cytochrome c-552 (477 aa).

Residues 1–26 (MVRISTSISYLWGMVASLFLMMPAYS) form the signal peptide. A heme c-binding site is contributed by histidine 94. Positions 122, 125, and 126 each coordinate heme. 6 residues coordinate heme c: cysteine 160, cysteine 163, histidine 164, cysteine 209, cysteine 212, and histidine 213. The Ca(2+) site is built by glutamate 215, tyrosine 216, lysine 261, and glutamine 263. Tyrosine 216 provides a ligand contact to substrate. Residue histidine 264 coordinates substrate. The heme c site is built by histidine 275, cysteine 282, cysteine 285, histidine 286, histidine 301, cysteine 314, cysteine 317, histidine 318, and histidine 393.

It belongs to the cytochrome c-552 family. Ca(2+) is required as a cofactor. It depends on heme c as a cofactor.

The protein resides in the periplasm. It carries out the reaction 6 Fe(III)-[cytochrome c] + NH4(+) + 2 H2O = 6 Fe(II)-[cytochrome c] + nitrite + 8 H(+). The protein operates within nitrogen metabolism; nitrate reduction (assimilation). Functionally, catalyzes the reduction of nitrite to ammonia, consuming six electrons in the process. The polypeptide is Cytochrome c-552 (Pectobacterium carotovorum subsp. carotovorum (strain PC1)).